The sequence spans 454 residues: Caspase-9 (454 aa).

A CARD domain is found at 1 to 92 (MDEADRQLLR…GTLASLLQSG (92 aa)). Threonine 163 bears the Phosphothreonine; by MAPK1 mark. Tyrosine 191 is modified (phosphotyrosine; by ABL1). Active-site residues include histidine 275 and cysteine 325. Residues serine 340 and serine 348 each carry the phosphoserine modification. Residues 354–367 (AVPYQEGPRPLDQL) constitute a propeptide that is removed on maturation.

This sequence belongs to the peptidase C14A family. As to quaternary structure, heterotetramer that consists of two anti-parallel arranged heterodimers, each one formed by a 35 kDa (p35) and a 10 kDa (p10) subunit. Caspase-9 and APAF1 bind to each other via their respective NH2-terminal CED-3 homologous domains in the presence of cytochrome C and ATP. Interacts (inactive form) with EFHD2. Interacts with HAX1. Interacts with BIRC2/c-IAP1, XIAP/BIRC4, BIRC5/survivin, BIRC6/bruce and BIRC7/livin. Interacts with ABL1 (via SH3 domain); the interaction is direct and increased in the response of cells to genotoxic stress and ABL1/c-Abl activation. Interacts with BCL2L10. Cleavages at Asp-353 by granzyme B and at Asp-368 by caspase-3 generate the two active subunits. Caspase-8 and -10 can also be involved in these processing events. In terms of processing, phosphorylated at Thr-163 by MAPK1/ERK2. Phosphorylation at Thr-163 is sufficient to block caspase-9 processing and subsequent caspase-3 activation. Phosphorylation on Tyr-191 by ABL1/c-Abl; occurs in the response of cells to DNA damage. Post-translationally, ubiquitinated by BIRC6; this activity is inhibited by DIABLO/SMAC.

It catalyses the reaction Strict requirement for an Asp residue at position P1 and with a marked preference for His at position P2. It has a preferred cleavage sequence of Leu-Gly-His-Asp-|-Xaa.. Its activity is regulated as follows. Inhibited by BIRC6; following inhibition of BIRC6-caspase binding by DIABLO/SMAC, BIRC6 is subjected to caspase cleavage, leading to an increase in active caspases. Involved in the activation cascade of caspases responsible for apoptosis execution. Binding of caspase-9 to Apaf-1 leads to activation of the protease which then cleaves and activates effector caspases caspase-3 (CASP3) or caspase-7 (CASP7). Promotes DNA damage-induced apoptosis in a ABL1/c-Abl-dependent manner. Proteolytically cleaves poly(ADP-ribose) polymerase (PARP). Cleaves BIRC6 following inhibition of BIRC6-caspase binding by DIABLO/SMAC. The chain is Caspase-9 (Casp9) from Mus musculus (Mouse).